The chain runs to 715 residues: MFNVVKKTFAYGDHQVTIETGEVARQAGGAVLVSMEETVVLVTVVAAKNAKPGQDFFPLTVDYQEKTYAAGRIPGGFFKREGRPSEKETLTCRLIDRPIRPLFPDGFYNEVQVIATVMSLNPEIDSDIPALIGASAALAISGVPFNGPIGAARVGYIDGQYVLCPTLSQLKGSQLDLVVAGTEAAVLMVESEADQLSEEVMLGAVVFGHTEMQKAINAINELVEEAGKPEWEWEAAPKDEALVASLSALVSAKLEEAYNITVKQTRSQAVKAIRAEAVAALCTGAEGAPDENTVGNLFHEIEASIVRGRILSGAPRIDGRDTRTVRPITMRSGVLPRTHGSALFTRGETQALAVATLGTNRDEQIIDALAGEYRDRFMLHYNMPPYATGECGRVGTPKRREIGHGRLAKRALLAVLPKPEDFSYSMRLVSEITESNGSSSMASVCGGCLALLDAGVPLKAHVAGIAMGLIKDGNRFAVLTDILGDEDHLGDMDFKVAGSTTGITALQMDIKIQGITKEIMQVALAQAKEARIHILNLMQESAAGPREEMSAYAPRLYTFKINPEKIRDVIGKGGAVIRALTEETGTTIDIQDDGTITIAATSGEAAAAARSRIDAITAEVEIGKIYEGTVLKILDFGAIVSVLPGKDGLLHISQIAQERVNKVEDYVKEGQIVRVKVLETDDRGRVKLSMKAAAADEGTVAQPVAAPEAAVQQQQ.

Mg(2+)-binding residues include aspartate 487 and aspartate 493. The region spanning 554–613 is the KH domain; the sequence is PRLYTFKINPEKIRDVIGKGGAVIRALTEETGTTIDIQDDGTITIAATSGEAAAAARSRI. Residues 623–691 form the S1 motif domain; the sequence is GKIYEGTVLK…DRGRVKLSMK (69 aa).

This sequence belongs to the polyribonucleotide nucleotidyltransferase family. Requires Mg(2+) as cofactor.

Its subcellular location is the cytoplasm. It catalyses the reaction RNA(n+1) + phosphate = RNA(n) + a ribonucleoside 5'-diphosphate. Involved in mRNA degradation. Catalyzes the phosphorolysis of single-stranded polyribonucleotides processively in the 3'- to 5'-direction. This is Polyribonucleotide nucleotidyltransferase from Dechloromonas aromatica (strain RCB).